Here is a 163-residue protein sequence, read N- to C-terminus: Fatty acid-binding protein homolog (163 aa).

A signal peptide spans 1–23; it reads MRCLVALILTVLIVTPEVEAKTL.

Belongs to the calycin superfamily. Fatty-acid binding protein (FABP) family. In terms of tissue distribution, abundant in the fluid surrounding the developing embryo of Ascaris suum.

In terms of biological role, may play a role in sequestering potentially toxic fatty acids and their peroxidation products, or it may be involved in the maintenance of the impermeable lipid layer of the eggshell. This chain is Fatty acid-binding protein homolog, found in Ascaris suum (Pig roundworm).